The sequence spans 932 residues: Isoleucine--tRNA ligase (932 aa).

The 'HIGH' region signature appears at Pro57–Thr67. Residue Glu559 coordinates L-isoleucyl-5'-AMP. The 'KMSKS' region signature appears at Lys600–Ser604. Position 603 (Lys603) interacts with ATP. Residues Cys899, Cys902, Cys919, and Cys922 each contribute to the Zn(2+) site.

This sequence belongs to the class-I aminoacyl-tRNA synthetase family. IleS type 1 subfamily. Monomer. Requires Zn(2+) as cofactor.

The protein resides in the cytoplasm. The catalysed reaction is tRNA(Ile) + L-isoleucine + ATP = L-isoleucyl-tRNA(Ile) + AMP + diphosphate. In terms of biological role, catalyzes the attachment of isoleucine to tRNA(Ile). As IleRS can inadvertently accommodate and process structurally similar amino acids such as valine, to avoid such errors it has two additional distinct tRNA(Ile)-dependent editing activities. One activity is designated as 'pretransfer' editing and involves the hydrolysis of activated Val-AMP. The other activity is designated 'posttransfer' editing and involves deacylation of mischarged Val-tRNA(Ile). The chain is Isoleucine--tRNA ligase from Caldanaerobacter subterraneus subsp. tengcongensis (strain DSM 15242 / JCM 11007 / NBRC 100824 / MB4) (Thermoanaerobacter tengcongensis).